Here is a 128-residue protein sequence, read N- to C-terminus: RxLR effector protein SFI2 (128 aa).

The first 22 residues, 1–22 (MRSAFYIFLVVAVLARCSVVAA), serve as a signal peptide directing secretion. The RxLR-dEER signature appears at 52-71 (RLLRVAGREDDDATTDEEDR).

The protein belongs to the RxLR effector family.

The protein localises to the secreted. It localises to the host nucleus. Functionally, effector that suppresses flg22-induced post-translational MAP kinase activation both tomato and Arabidopsis. The perception of highly conserved pathogen- or microbe-associated molecular patterns (PAMPs/MAMPs), such as flg22, triggers converging signaling pathways recruiting MAP kinase cascades and inducing transcriptional re-programming, yielding a generic antimicrobial response. This is RxLR effector protein SFI2 from Phytophthora infestans (strain T30-4) (Potato late blight agent).